A 669-amino-acid polypeptide reads, in one-letter code: UvrABC system protein B (669 aa).

Residues 26–183 form the Helicase ATP-binding domain; it reads TNFHAGIAKQ…RHLTELQYTR (158 aa). An ATP-binding site is contributed by 39–46; it reads GVTGSGKT. Residues 92 to 115 carry the Beta-hairpin motif; the sequence is YYDYYQPEAYVPASDTFIEKDSSI. The 167-residue stretch at 431 to 597 folds into the Helicase C-terminal domain; that stretch reads QVDDLISQIN…SVVRPISDIL (167 aa). The region spanning 631 to 666 is the UVR domain; it reads AAQMKVLEQKMYQHARDLEFEDAARIRDQIQRLREA.

It belongs to the UvrB family. As to quaternary structure, forms a heterotetramer with UvrA during the search for lesions. Interacts with UvrC in an incision complex.

Its subcellular location is the cytoplasm. The UvrABC repair system catalyzes the recognition and processing of DNA lesions. A damage recognition complex composed of 2 UvrA and 2 UvrB subunits scans DNA for abnormalities. Upon binding of the UvrA(2)B(2) complex to a putative damaged site, the DNA wraps around one UvrB monomer. DNA wrap is dependent on ATP binding by UvrB and probably causes local melting of the DNA helix, facilitating insertion of UvrB beta-hairpin between the DNA strands. Then UvrB probes one DNA strand for the presence of a lesion. If a lesion is found the UvrA subunits dissociate and the UvrB-DNA preincision complex is formed. This complex is subsequently bound by UvrC and the second UvrB is released. If no lesion is found, the DNA wraps around the other UvrB subunit that will check the other stand for damage. This Xylella fastidiosa (strain M23) protein is UvrABC system protein B.